Reading from the N-terminus, the 166-residue chain is NAD(P)H-quinone oxidoreductase subunit I, chloroplastic (166 aa).

4Fe-4S ferredoxin-type domains follow at residues 55–84 (GRIH…VDWK) and 95–124 (LNYS…MTEE). [4Fe-4S] cluster contacts are provided by cysteine 64, cysteine 67, cysteine 70, cysteine 74, cysteine 104, cysteine 107, cysteine 110, and cysteine 114.

This sequence belongs to the complex I 23 kDa subunit family. In terms of assembly, NDH is composed of at least 16 different subunits, 5 of which are encoded in the nucleus. It depends on [4Fe-4S] cluster as a cofactor.

The protein localises to the plastid. It is found in the chloroplast thylakoid membrane. It catalyses the reaction a plastoquinone + NADH + (n+1) H(+)(in) = a plastoquinol + NAD(+) + n H(+)(out). The catalysed reaction is a plastoquinone + NADPH + (n+1) H(+)(in) = a plastoquinol + NADP(+) + n H(+)(out). Its function is as follows. NDH shuttles electrons from NAD(P)H:plastoquinone, via FMN and iron-sulfur (Fe-S) centers, to quinones in the photosynthetic chain and possibly in a chloroplast respiratory chain. The immediate electron acceptor for the enzyme in this species is believed to be plastoquinone. Couples the redox reaction to proton translocation, and thus conserves the redox energy in a proton gradient. The protein is NAD(P)H-quinone oxidoreductase subunit I, chloroplastic of Aphanactis jamesoniana.